The chain runs to 411 residues: Serine hydroxymethyltransferase (411 aa).

(6S)-5,6,7,8-tetrahydrofolate contacts are provided by residues L113 and 117 to 119 (GHL). K222 is modified (N6-(pyridoxal phosphate)lysine). (6S)-5,6,7,8-tetrahydrofolate is bound by residues E238 and 346-348 (SPF).

The protein belongs to the SHMT family. In terms of assembly, homodimer. Requires pyridoxal 5'-phosphate as cofactor.

The protein resides in the cytoplasm. The catalysed reaction is (6R)-5,10-methylene-5,6,7,8-tetrahydrofolate + glycine + H2O = (6S)-5,6,7,8-tetrahydrofolate + L-serine. Its pathway is one-carbon metabolism; tetrahydrofolate interconversion. It functions in the pathway amino-acid biosynthesis; glycine biosynthesis; glycine from L-serine: step 1/1. Functionally, catalyzes the reversible interconversion of serine and glycine with tetrahydrofolate (THF) serving as the one-carbon carrier. This reaction serves as the major source of one-carbon groups required for the biosynthesis of purines, thymidylate, methionine, and other important biomolecules. Also exhibits THF-independent aldolase activity toward beta-hydroxyamino acids, producing glycine and aldehydes, via a retro-aldol mechanism. The polypeptide is Serine hydroxymethyltransferase (Prochlorococcus marinus (strain NATL1A)).